Consider the following 82-residue polypeptide: ATP synthase subunit c (82 aa).

2 consecutive transmembrane segments (helical) span residues 6 to 26 (LGLT…GCGI) and 49 to 69 (IMVT…YALV).

Belongs to the ATPase C chain family. As to quaternary structure, F-type ATPases have 2 components, F(1) - the catalytic core - and F(0) - the membrane proton channel. F(1) has five subunits: alpha(3), beta(3), gamma(1), delta(1), epsilon(1). F(0) has three main subunits: a(1), b(2) and c(10-14). The alpha and beta chains form an alternating ring which encloses part of the gamma chain. F(1) is attached to F(0) by a central stalk formed by the gamma and epsilon chains, while a peripheral stalk is formed by the delta and b chains.

It localises to the cell inner membrane. F(1)F(0) ATP synthase produces ATP from ADP in the presence of a proton or sodium gradient. F-type ATPases consist of two structural domains, F(1) containing the extramembraneous catalytic core and F(0) containing the membrane proton channel, linked together by a central stalk and a peripheral stalk. During catalysis, ATP synthesis in the catalytic domain of F(1) is coupled via a rotary mechanism of the central stalk subunits to proton translocation. Its function is as follows. Key component of the F(0) channel; it plays a direct role in translocation across the membrane. A homomeric c-ring of between 10-14 subunits forms the central stalk rotor element with the F(1) delta and epsilon subunits. This chain is ATP synthase subunit c, found in Nitratidesulfovibrio vulgaris (strain ATCC 29579 / DSM 644 / CCUG 34227 / NCIMB 8303 / VKM B-1760 / Hildenborough) (Desulfovibrio vulgaris).